Here is a 297-residue protein sequence, read N- to C-terminus: MTRLQQRLEEALANLPDALRTSLTPIINTEFKGVISKEQFQSLQADSQLSDKELRLALLPLAAAFSVAPISNFYVGAIARGLTGNLYFGANMEYNDVQLGQTIHAEQSAISHAWIQGETGISNITINFSPCGHCRQFMNELTTADSLMVQLPERNEKSLQEYLPESFGPKDLGIEGGLLAPLSHNLALETESPLLRKALEAANRSHAPYSHNLSGIALEMESGEVYYGMYAENAAFNPSLPPLQVALVHANMSREDILTVKSAALVEDHKGAISHLAITQSTLEALNPDVTLEYASL.

CMP/dCMP-type deaminase domains follow at residues 50–170 (SDKE…FGPK) and 189–297 (ETES…YASL). 91–93 (NME) lines the substrate pocket. His-104 is a binding site for Zn(2+). The Proton donor role is filled by Glu-106. Zn(2+) contacts are provided by Cys-131 and Cys-134.

It belongs to the cytidine and deoxycytidylate deaminase family. Homodimer. Requires Zn(2+) as cofactor.

The enzyme catalyses cytidine + H2O + H(+) = uridine + NH4(+). It catalyses the reaction 2'-deoxycytidine + H2O + H(+) = 2'-deoxyuridine + NH4(+). In terms of biological role, this enzyme scavenges exogenous and endogenous cytidine and 2'-deoxycytidine for UMP synthesis. The polypeptide is Cytidine deaminase (Aliivibrio fischeri (strain ATCC 700601 / ES114) (Vibrio fischeri)).